Consider the following 150-residue polypeptide: 3-dehydroquinate dehydratase (150 aa).

Catalysis depends on Y26, which acts as the Proton acceptor. Substrate is bound by residues N77, H83, and D90. The active-site Proton donor is the H103. Residues 104–105 (LS) and R114 contribute to the substrate site.

It belongs to the type-II 3-dehydroquinase family. As to quaternary structure, homododecamer.

It carries out the reaction 3-dehydroquinate = 3-dehydroshikimate + H2O. It functions in the pathway metabolic intermediate biosynthesis; chorismate biosynthesis; chorismate from D-erythrose 4-phosphate and phosphoenolpyruvate: step 3/7. In terms of biological role, catalyzes a trans-dehydration via an enolate intermediate. This is 3-dehydroquinate dehydratase from Yersinia enterocolitica serotype O:8 / biotype 1B (strain NCTC 13174 / 8081).